Reading from the N-terminus, the 501-residue chain is Raftlin-2 (501 aa).

Disordered regions lie at residues 1 to 20 and 196 to 238; these read MGCGLRKLEDPDDSSPGKIF and SWNE…SRKG. A lipid anchor (N-myristoyl glycine) is attached at G2. A lipid anchor (S-palmitoyl cysteine) is attached at C3. Positions 224–233 are enriched in polar residues; the sequence is MEQNGSPSSS. S405 carries the post-translational modification Phosphoserine. Residues 407–454 form a disordered region; sequence AQTTDKKASRRIKGEDKNKATSRSIGLDTTTPQPAESRHPPEECRLSP. Residue T409 is modified to Phosphothreonine. A compositionally biased stretch (basic and acidic residues) spans 410-425; it reads TDKKASRRIKGEDKNK. Polar residues predominate over residues 427 to 440; sequence TSRSIGLDTTTPQP. A Phosphoserine modification is found at S430. The span at 442 to 451 shows a compositional bias: basic and acidic residues; the sequence is ESRHPPEECR.

It belongs to the raftlin family.

The protein resides in the cell membrane. Upon bacterial lipopolysaccharide stimulation, mediates clathrin-dependent internalization of TLR4 in dendritic cells, resulting in activation of TICAM1-mediated signaling and subsequent IFNB1 production. May regulate B-cell antigen receptor mediated-signaling. This is Raftlin-2 (RFTN2) from Pongo abelii (Sumatran orangutan).